Here is a 485-residue protein sequence, read N- to C-terminus: Metalloprotease AprA (485 aa).

His187 lines the Zn(2+) pocket. Glu188 is a catalytic residue. Zn(2+)-binding residues include His191 and His197. Residues Arg268, Gly270, Thr272, Asp300, Gly302, Gly303, Asp305, Thr342, Glu344, Gly349, Gly351, Asp353, Asn358, Leu360, Asn362, Gly366, Gly367, Ala368, Gly369, Asp371, Gly375, Gly376, Gly377, Gly378, Asp380, Gly384, Gly385, Thr386, Gly387, Asp389, Asp398, Asp405, Asp415, Asp461, Thr463, Asn465, Ser467, and Asp469 each contribute to the Ca(2+) site. 3 Hemolysin-type calcium-binding repeats span residues 347–364 (FGGS…ANVL), 365–382 (KGGA…ADQL), and 383–395 (WGGT…VFGA).

This sequence belongs to the peptidase M10B family. Ca(2+) is required as a cofactor. Requires Zn(2+) as cofactor.

The protein localises to the secreted. Functionally, secreted protease which is important for P.entomophila to counteract the local immune response of Drosophila. Can degrade antimicrobial peptides (AMPs), e.g. Diptericin and Cecropin A. Thus, protects P.entomophila from the Drosophila antimicrobial peptides produced by the gut innate immune response, and promotes bacterial persistence in the Drosophila gut and killing of the host. Is responsible for maturation of pro-Monalysin to the active toxin Monalysin, by cleaving its N-terminus. In Pseudomonas entomophila (strain L48), this protein is Metalloprotease AprA.